The primary structure comprises 473 residues: Zinc finger and BTB domain-containing protein 9 (473 aa).

In terms of domain architecture, BTB spans 48–112 (CDVSLLVQGR…IYSGRLRLPL (65 aa)). Residues 177-279 (QTPVQSSAST…LELPAPPALP (103 aa)) are disordered. Residues 182–196 (SSASTESPASTESPV) show a composition bias toward low complexity. Residues 211–226 (VEEEEEEEEDDDDEDQ) show a composition bias toward acidic residues. Positions 227-239 (GSATLSQTPQPQR) are enriched in polar residues. Residue lysine 286 forms a Glycyl lysine isopeptide (Lys-Gly) (interchain with G-Cter in SUMO1); alternate linkage. A Glycyl lysine isopeptide (Lys-Gly) (interchain with G-Cter in SUMO2); alternate cross-link involves residue lysine 286. Residues lysine 293 and lysine 307 each participate in a glycyl lysine isopeptide (Lys-Gly) (interchain with G-Cter in SUMO2) cross-link. The interval 293–376 (KEEISGSGTQ…VHGPVKLGGT (84 aa)) is disordered. Residues 355-364 (SGGGGPGGAG) are compositionally biased toward gly residues. A Glycyl lysine isopeptide (Lys-Gly) (interchain with G-Cter in SUMO2) cross-link involves residue lysine 382. The C2H2-type 1 zinc finger occupies 411-433 (FGCGICNKRFKLKHHLTEHMKTH). A C2H2-type 2; atypical zinc finger spans residues 438 to 460 (HACPHCGRRFRVHACFLRHRDLC).

It is found in the nucleus. In terms of biological role, may be involved in transcriptional regulation. This Homo sapiens (Human) protein is Zinc finger and BTB domain-containing protein 9 (ZBTB9).